A 249-amino-acid polypeptide reads, in one-letter code: U1 small nuclear ribonucleoprotein usp102 (249 aa).

A disordered region spans residues 1-25 (MDPQTNSHQEVQQPSPKETDSQTPS). The RRM 1 domain maps to 26-105 (ETLYIRNIEE…KPMMIQYSKS (80 aa)). The segment at 113-157 (RESPEEIETRKKDRKNRREMLKRTSALQPAAPKPTHKKPVPKRNV) is disordered. A compositionally biased stretch (basic and acidic residues) spans 114–134 (ESPEEIETRKKDRKNRREMLK). In terms of domain architecture, RRM 2 spans 174–247 (KVLLLQNIPQ…NQIKVTFARK (74 aa)).

It belongs to the RRM U1 A/B'' family. Component of the spliceosome where it is associated with snRNP U1.

It is found in the nucleus. Its subcellular location is the nucleolus. Involved in nuclear mRNA splicing. In Schizosaccharomyces pombe (strain 972 / ATCC 24843) (Fission yeast), this protein is U1 small nuclear ribonucleoprotein usp102.